The primary structure comprises 221 residues: Octanoyltransferase (221 aa).

The BPL/LPL catalytic domain maps to 31–213 (DKSADEIWLV…HFVTILGYNK (183 aa)). Substrate-binding positions include 70–77 (RGGQITYH), 142–144 (SLG), and 155–157 (GLA). Cysteine 173 functions as the Acyl-thioester intermediate in the catalytic mechanism.

The protein belongs to the LipB family.

The protein resides in the cytoplasm. The enzyme catalyses octanoyl-[ACP] + L-lysyl-[protein] = N(6)-octanoyl-L-lysyl-[protein] + holo-[ACP] + H(+). Its pathway is protein modification; protein lipoylation via endogenous pathway; protein N(6)-(lipoyl)lysine from octanoyl-[acyl-carrier-protein]: step 1/2. In terms of biological role, catalyzes the transfer of endogenously produced octanoic acid from octanoyl-acyl-carrier-protein onto the lipoyl domains of lipoate-dependent enzymes. Lipoyl-ACP can also act as a substrate although octanoyl-ACP is likely to be the physiological substrate. The protein is Octanoyltransferase of Mannheimia succiniciproducens (strain KCTC 0769BP / MBEL55E).